A 668-amino-acid polypeptide reads, in one-letter code: Eukaryotic translation initiation factor 3 subunit L (668 aa).

Polar residues predominate over residues 1 to 17; it reads MVADASQQGQSNGAAFN. The disordered stretch occupies residues 1 to 42; it reads MVADASQQGQSNGAAFNQQQQYQQQQQRQLFGGEEEFGDEEE. Residues 18–32 show a composition bias toward low complexity; sequence QQQQYQQQQQRQLFG. Residues 33–42 are compositionally biased toward acidic residues; that stretch reads GEEEFGDEEE. In terms of domain architecture, PCI spans 358–552; that stretch reads SFTHILVFIM…QVVNTSDLDF (195 aa). The interval 625 to 668 is disordered; that stretch reads AGVKAGPPAFSQRSGGAGRSSVNKSAPAPAGAWGSSKPQPSVTA. Residues 648-662 show a composition bias toward low complexity; that stretch reads KSAPAPAGAWGSSKP.

It belongs to the eIF-3 subunit L family. Component of the eukaryotic translation initiation factor 3 (eIF-3) complex.

It localises to the cytoplasm. Component of the eukaryotic translation initiation factor 3 (eIF-3) complex, which is involved in protein synthesis of a specialized repertoire of mRNAs and, together with other initiation factors, stimulates binding of mRNA and methionyl-tRNAi to the 40S ribosome. The eIF-3 complex specifically targets and initiates translation of a subset of mRNAs involved in cell proliferation. In Mycosarcoma maydis (Corn smut fungus), this protein is Eukaryotic translation initiation factor 3 subunit L.